Consider the following 399-residue polypeptide: Carbamoyl phosphate synthase arginine-specific small chain (399 aa).

Residues 187-379 (DVALVDCGVK…VERMRCYRKL (193 aa)) enclose the Glutamine amidotransferase type-1 domain. The active-site Nucleophile is cysteine 267. Residues histidine 352 and glutamate 354 contribute to the active site.

It belongs to the CarA family. In terms of assembly, heterodimer composed of 2 chains; the small (or glutamine) chain promotes the hydrolysis of glutamine to ammonia, which is used by the large (or ammonia) chain to synthesize carbamoyl phosphate.

Its subcellular location is the cytoplasm. The enzyme catalyses hydrogencarbonate + L-glutamine + 2 ATP + H2O = carbamoyl phosphate + L-glutamate + 2 ADP + phosphate + 2 H(+). It carries out the reaction L-glutamine + H2O = L-glutamate + NH4(+). The protein operates within amino-acid biosynthesis; L-arginine biosynthesis; carbamoyl phosphate from bicarbonate: step 1/1. Its function is as follows. Small subunit of the arginine-specific carbamoyl phosphate synthase (CPSase). CPSase catalyzes the formation of carbamoyl phosphate from the ammonia moiety of glutamine, carbonate, and phosphate donated by ATP, constituting the first step of 2 biosynthetic pathways, one leading to arginine and/or urea and the other to pyrimidine nucleotides. The small subunit (glutamine amidotransferase) binds and cleaves glutamine to supply the large subunit with the substrate ammonia. In Eremothecium gossypii (strain ATCC 10895 / CBS 109.51 / FGSC 9923 / NRRL Y-1056) (Yeast), this protein is Carbamoyl phosphate synthase arginine-specific small chain (CPA1).